We begin with the raw amino-acid sequence, 196 residues long: Ribonuclease S-F11 (196 aa).

Cys16 and Cys21 are joined by a disulfide. N-linked (GlcNAc...) asparagine glycosylation is present at Asn28. The active-site Proton donor is His32. RNA is bound by residues His32 and 69 to 70; that span reads QL. 3 disulfides stabilise this stretch: Cys46/Cys94, Cys153/Cys186, and Cys169/Cys180. Gln87 is a catalytic residue. 90–91 provides a ligand contact to RNA; that stretch reads KH. His91 functions as the Proton acceptor in the catalytic mechanism.

The protein belongs to the RNase T2 family. In terms of assembly, monomer.

The protein resides in the secreted. It localises to the extracellular space. The catalysed reaction is a ribonucleotidyl-ribonucleotide-RNA + H2O = a 3'-end 3'-phospho-ribonucleotide-RNA + a 5'-end dephospho-ribonucleoside-RNA + H(+). Its function is as follows. Self-incompatibility (SI) is the inherited ability of a flowering plant to prevent self-fertilization by discriminating between self and non-self pollen during pollination. In many species of the Solanaceae, self-incompatibility is controlled by the single, multiallelic locus S. This is Ribonuclease S-F11 from Nicotiana alata (Winged tobacco).